Here is a 228-residue protein sequence, read N- to C-terminus: 2,3-bisphosphoglycerate-dependent phosphoglycerate mutase (228 aa).

Substrate-binding positions include 8-15 (RHGQSVWN), 21-22 (TG), Arg60, 87-90 (ERHY), Lys98, 114-115 (RR), and 183-184 (GN). The active-site Tele-phosphohistidine intermediate is His9. Glu87 serves as the catalytic Proton donor/acceptor.

It belongs to the phosphoglycerate mutase family. BPG-dependent PGAM subfamily.

The enzyme catalyses (2R)-2-phosphoglycerate = (2R)-3-phosphoglycerate. The protein operates within carbohydrate degradation; glycolysis; pyruvate from D-glyceraldehyde 3-phosphate: step 3/5. Its function is as follows. Catalyzes the interconversion of 2-phosphoglycerate and 3-phosphoglycerate. This Staphylococcus carnosus (strain TM300) protein is 2,3-bisphosphoglycerate-dependent phosphoglycerate mutase.